The chain runs to 193 residues: Nucleoside triphosphate pyrophosphatase (193 aa).

Aspartate 69 serves as the catalytic Proton acceptor.

The protein belongs to the Maf family. It depends on a divalent metal cation as a cofactor.

Its subcellular location is the cytoplasm. It catalyses the reaction a ribonucleoside 5'-triphosphate + H2O = a ribonucleoside 5'-phosphate + diphosphate + H(+). It carries out the reaction a 2'-deoxyribonucleoside 5'-triphosphate + H2O = a 2'-deoxyribonucleoside 5'-phosphate + diphosphate + H(+). Its function is as follows. Nucleoside triphosphate pyrophosphatase. May have a dual role in cell division arrest and in preventing the incorporation of modified nucleotides into cellular nucleic acids. This chain is Nucleoside triphosphate pyrophosphatase, found in Parasynechococcus marenigrum (strain WH8102).